The chain runs to 761 residues: Protein ACTIVITY OF BC1 COMPLEX KINASE 8, chloroplastic (761 aa).

The N-terminal 57 residues, 1-57 (MATSSSSSSSLLLPNINFNSRQSPTITRSVSIAGIFLPRNRLSYNHNLRIRTRLIRA), are a transit peptide targeting the chloroplast. The Protein kinase domain occupies 288–648 (RFDYEPIAAA…VKDLRKRWDR (361 aa)). ATP is bound by residues 294–302 (IAAASLGQV) and Lys315. Asp452 (proton acceptor) is an active-site residue. The helical transmembrane segment at 725–745 (PATIAYTVCAFFSLQVLIGII) threads the bilayer.

Belongs to the protein kinase superfamily. ADCK protein kinase family. As to expression, mostly expressed in leaves and flowers, and, to a lower extent, in stems, siliques and roots.

Its subcellular location is the plastid. It localises to the chloroplast envelope. The protein resides in the chloroplast membrane. The enzyme catalyses L-seryl-[protein] + ATP = O-phospho-L-seryl-[protein] + ADP + H(+). The catalysed reaction is L-threonyl-[protein] + ATP = O-phospho-L-threonyl-[protein] + ADP + H(+). Functionally, involved in resistance to oxidative stress (e.g. hydrogen peroxide H(2)O(2)), high light and heavy metals (e.g. cadmium ions Cd(2+)). Influences responses to reactive oxygen species (ROS) production. Together with SIA1, regulates iron distribution within the chloroplast and mediates the oxidative stress response. Together with ABC1K7, influences chloroplast lipid synthesis/accumulation and modulates chloroplast membrane composition in response to stress. The polypeptide is Protein ACTIVITY OF BC1 COMPLEX KINASE 8, chloroplastic (Arabidopsis thaliana (Mouse-ear cress)).